A 220-amino-acid polypeptide reads, in one-letter code: Deoxyribose-phosphate aldolase (220 aa).

Catalysis depends on Asp-89, which acts as the Proton donor/acceptor. The Schiff-base intermediate with acetaldehyde role is filled by Lys-151. The active-site Proton donor/acceptor is the Lys-180.

The protein belongs to the DeoC/FbaB aldolase family. DeoC type 1 subfamily.

It localises to the cytoplasm. It carries out the reaction 2-deoxy-D-ribose 5-phosphate = D-glyceraldehyde 3-phosphate + acetaldehyde. It functions in the pathway carbohydrate degradation; 2-deoxy-D-ribose 1-phosphate degradation; D-glyceraldehyde 3-phosphate and acetaldehyde from 2-deoxy-alpha-D-ribose 1-phosphate: step 2/2. Functionally, catalyzes a reversible aldol reaction between acetaldehyde and D-glyceraldehyde 3-phosphate to generate 2-deoxy-D-ribose 5-phosphate. The chain is Deoxyribose-phosphate aldolase from Staphylococcus saprophyticus subsp. saprophyticus (strain ATCC 15305 / DSM 20229 / NCIMB 8711 / NCTC 7292 / S-41).